The following is a 270-amino-acid chain: NAD kinase (270 aa).

Catalysis depends on D63, which acts as the Proton acceptor. NAD(+) is bound by residues 63 to 64 (DG), R68, 131 to 132 (NE), K142, R159, D161, 172 to 177 (TAYAMS), A196, and Q230.

Belongs to the NAD kinase family. Requires a divalent metal cation as cofactor.

The protein localises to the cytoplasm. The catalysed reaction is NAD(+) + ATP = ADP + NADP(+) + H(+). In terms of biological role, involved in the regulation of the intracellular balance of NAD and NADP, and is a key enzyme in the biosynthesis of NADP. Catalyzes specifically the phosphorylation on 2'-hydroxyl of the adenosine moiety of NAD to yield NADP. The protein is NAD kinase of Methanoregula boonei (strain DSM 21154 / JCM 14090 / 6A8).